Here is a 641-residue protein sequence, read N- to C-terminus: Chaperone protein DnaK (641 aa).

Thr-200 is modified (phosphothreonine; by autocatalysis). Low complexity predominate over residues 606 to 623; sequence AEQGGNADAASGNAQASK. Residues 606–627 form a disordered region; sequence AEQGGNADAASGNAQASKAADD.

The protein belongs to the heat shock protein 70 family.

Its function is as follows. Acts as a chaperone. This is Chaperone protein DnaK from Xanthomonas euvesicatoria pv. vesicatoria (strain 85-10) (Xanthomonas campestris pv. vesicatoria).